The following is a 330-amino-acid chain: tRNA U34 carboxymethyltransferase (330 aa).

Carboxy-S-adenosyl-L-methionine-binding positions include Lys-91, Trp-105, Lys-110, Gly-130, 152 to 154 (DPS), 181 to 182 (IE), Met-196, Tyr-200, and Arg-315.

It belongs to the class I-like SAM-binding methyltransferase superfamily. CmoB family. Homotetramer.

It catalyses the reaction carboxy-S-adenosyl-L-methionine + 5-hydroxyuridine(34) in tRNA = 5-carboxymethoxyuridine(34) in tRNA + S-adenosyl-L-homocysteine + H(+). Catalyzes carboxymethyl transfer from carboxy-S-adenosyl-L-methionine (Cx-SAM) to 5-hydroxyuridine (ho5U) to form 5-carboxymethoxyuridine (cmo5U) at position 34 in tRNAs. This is tRNA U34 carboxymethyltransferase from Shewanella denitrificans (strain OS217 / ATCC BAA-1090 / DSM 15013).